A 679-amino-acid chain; its full sequence is Glycine--tRNA ligase beta subunit (679 aa).

This sequence belongs to the class-II aminoacyl-tRNA synthetase family. As to quaternary structure, tetramer of two alpha and two beta subunits.

The protein resides in the cytoplasm. The enzyme catalyses tRNA(Gly) + glycine + ATP = glycyl-tRNA(Gly) + AMP + diphosphate. The polypeptide is Glycine--tRNA ligase beta subunit (Streptococcus gordonii (strain Challis / ATCC 35105 / BCRC 15272 / CH1 / DL1 / V288)).